A 756-amino-acid chain; its full sequence is MLGICRGRRKFLAASLSLLCIPAITWIYLFSGSFEDGKPVSLSPLESQAHSPRYTASSQRERESLEVRMREVEEENRALRRQLSLAQGRAPSHRRGNHSKTYSMEEGTGDSENLRAGIVAGNSSECGQQPVVEKCETIHVAIVCAGYNASRDVVTLVKSVLFHRRNPLHFHLIADSIAEQILATLFQTWMVPAVRVDFYNADELKSEVSWIPNKHYSGIYGLMKLVLTKTLPANLERVIVLDTDITFATDIAELWAVFHKFKGQQVLGLVENQSDWYLGNLWKNHRPWPALGRGYNTGVILLLLDKLRKMKWEQMWRLTAERELMGMLSTSLADQDIFNAVIKQNPFLVYQLPCFWNVQLSDHTRSEQCYRDVSDLKVIHWNSPKKLRVKNKHVEFFRNLYLTFLEYDGNLLRRELFGCPSEADVNSENLQKQLSELDEDDLCYEFRRERFTVHRTHLYFLHYEYEPAADSTDVTLVAQLSMDRLQMLEAICKHWEGPISLALYLSDAEAQQFLRYAQGSEVLMSRHNVGYHIVYKEGQFYPVNLLRNVAMKHISTPYMFLSDIDFLPMYGLYEYLRKSVIQLDLANTKKAMIVPAFETLRYRLSFPKSKAELLSMLDMGTLFTFRYHVWTKGHAPTNFAKWRTATTPYRVEWEADFEPYVVVRRDCPEYDRRFVGFGWNKVAHIMELDVQEYEFIVLPNAYMIHMPHAPSFDITKFRSNKQYRICLKTLKEEFQQDMSRRYGFAALKYLTAENNS.

Residues 1-10 (MLGICRGRRK) are Cytoplasmic-facing. Residues 11 to 31 (FLAASLSLLCIPAITWIYLFS) form a helical; Signal-anchor for type II membrane protein membrane-spanning segment. Residues 32–756 (GSFEDGKPVS…LKYLTAENNS (725 aa)) lie on the Lumenal side of the membrane. Disordered stretches follow at residues 43-69 (SPLE…EVRM) and 81-109 (RQLS…EGTG). Residues 44-58 (PLESQAHSPRYTASS) show a composition bias toward polar residues. A coiled-coil region spans residues 53-95 (RYTASSQRERESLEVRMREVEEENRALRRQLSLAQGRAPSHRR). Basic and acidic residues predominate over residues 59–69 (QRERESLEVRM). Residues N97, N122, and N148 are each glycosylated (N-linked (GlcNAc...) asparagine). The segment at 138-413 (IHVAIVCAGY…FLEYDGNLLR (276 aa)) is xylosyltransferase activity. D242 and D244 together coordinate Mn(2+). A glycan (N-linked (GlcNAc...) asparagine) is linked at N272. The glucuronyltransferase activity stretch occupies residues 414-756 (RELFGCPSEA…LKYLTAENNS (343 aa)). The Mn(2+) site is built by D563 and D565.

In the C-terminal section; belongs to the glycosyltransferase 49 family. This sequence in the N-terminal section; belongs to the glycosyltransferase 8 family. In terms of assembly, interacts with DAG1 (via the N-terminal domain of alpha-DAG1); the interaction increases binding of DAG1 to laminin. Interacts with B4GAT1. It depends on Mn(2+) as a cofactor. In terms of tissue distribution, ubiquitous. Highest expression in heart, brain and skeletal muscle.

The protein localises to the golgi apparatus membrane. It catalyses the reaction 3-O-[beta-D-GlcA-(1-&gt;3)-beta-D-Xyl-(1-&gt;4)-Rib-ol-P-Rib-ol-P-3-beta-D-GalNAc-(1-&gt;3)-beta-D-GlcNAc-(1-&gt;4)-(O-6-P-alpha-D-Man)]-Thr-[protein] + UDP-alpha-D-xylose = 3-O-[alpha-D-Xyl-(1-&gt;3)-beta-D-GlcA-(1-&gt;4)-beta-D-Xyl-(1-&gt;4)-Rib-ol-P-Rib-ol-P-3-beta-D-GalNAc-(1-&gt;3)-beta-D-GlcNAc-(1-&gt;4)-(O-6-P-alpha-D-Man)]-Thr-[protein] + UDP + H(+). The enzyme catalyses 3-O-{(1-&gt;[3)-alpha-D-Xyl-(1-&gt;3)-beta-D-GlcA-(1-&gt;](n)-4)-beta-D-Xyl-(1-&gt;4)-Rib-ol-P-Rib-ol-P-3-beta-D-GalNAc-(1-&gt;3)-beta-D-GlcNAc-(1-&gt;4)-O-6-P-alpha-D-Man}-L-Thr-[protein] + UDP-alpha-D-glucuronate = 3-O-{beta-D-GlcA-(1-&gt;[3)-alpha-D-Xyl-(1-&gt;3)-beta-D-GlcA-(1-&gt;](n)-4)-beta-D-Xyl-(1-&gt;4)-Rib-ol-P-Rib-ol-P-3-beta-D-GalNAc-(1-&gt;3)-beta-D-GlcNAc-(1-&gt;4)-O-6-P-alpha-D-Man}-L-Thr-[protein] + UDP + H(+). The catalysed reaction is 3-O-{beta-D-GlcA-(1-&gt;[3)-alpha-D-Xyl-(1-&gt;3)-beta-D-GlcA-(1-&gt;](n)-4)-beta-D-Xyl-(1-&gt;4)-Rib-ol-P-Rib-ol-P-3-beta-D-GalNAc-(1-&gt;3)-beta-D-GlcNAc-(1-&gt;4)-O-6-P-alpha-D-Man}-L-Thr-[protein] + UDP-alpha-D-xylose = 3-O-{(1-&gt;[3)-alpha-D-Xyl-(1-&gt;3)-beta-D-GlcA-(1-&gt;](n+1)-4)-beta-D-Xyl-(1-&gt;4)-Rib-ol-P-Rib-ol-P-3-beta-D-GalNAc-(1-&gt;3)-beta-D-GlcNAc-(1-&gt;4)-O-6-P-alpha-D-Man}-L-Thr-[protein] + UDP + H(+). Its pathway is protein modification; protein glycosylation. Its function is as follows. Bifunctional glycosyltransferase with both alpha-1,3-xylosyltransferase and beta-1,3-glucuronyltransferase activities involved in the maturation of alpha-dystroglycan (DAG1) by glycosylation leading to DAG1 binding to laminin G-like domain-containing extracellular proteins with high affinity. Elongates the glucuronyl-beta-1,4-xylose-beta disaccharide primer structure initiated by B4GAT1 by adding repeating units [-3-Xylose-alpha-1,3-GlcA-beta-1-] to produce a heteropolysaccharide. Requires the phosphorylation of core M3 (O-mannosyl trisaccharide) by POMK to elongate the glucuronyl-beta-1,4-xylose-beta disaccharide primer. Plays a key role in skeletal muscle function and regeneration. The protein is Xylosyl- and glucuronyltransferase LARGE1 of Homo sapiens (Human).